Here is a 508-residue protein sequence, read N- to C-terminus: Light-independent protochlorophyllide reductase subunit B (508 aa).

[4Fe-4S] cluster is bound at residue Asp-36. Asp-294 functions as the Proton donor in the catalytic mechanism. 429–430 (GM) is a substrate binding site.

Belongs to the ChlB/BchB/BchZ family. Protochlorophyllide reductase is composed of three subunits; ChlL, ChlN and ChlB. Forms a heterotetramer of two ChlB and two ChlN subunits. [4Fe-4S] cluster serves as cofactor.

It catalyses the reaction chlorophyllide a + oxidized 2[4Fe-4S]-[ferredoxin] + 2 ADP + 2 phosphate = protochlorophyllide a + reduced 2[4Fe-4S]-[ferredoxin] + 2 ATP + 2 H2O. It functions in the pathway porphyrin-containing compound metabolism; chlorophyll biosynthesis (light-independent). Its function is as follows. Component of the dark-operative protochlorophyllide reductase (DPOR) that uses Mg-ATP and reduced ferredoxin to reduce ring D of protochlorophyllide (Pchlide) to form chlorophyllide a (Chlide). This reaction is light-independent. The NB-protein (ChlN-ChlB) is the catalytic component of the complex. The polypeptide is Light-independent protochlorophyllide reductase subunit B (Acaryochloris marina (strain MBIC 11017)).